The primary structure comprises 105 residues: Large ribosomal subunit protein uL23 (105 aa).

The protein belongs to the universal ribosomal protein uL23 family. In terms of assembly, part of the 50S ribosomal subunit. Contacts protein L29, and trigger factor when it is bound to the ribosome.

One of the early assembly proteins it binds 23S rRNA. One of the proteins that surrounds the polypeptide exit tunnel on the outside of the ribosome. Forms the main docking site for trigger factor binding to the ribosome. The polypeptide is Large ribosomal subunit protein uL23 (Chloroherpeton thalassium (strain ATCC 35110 / GB-78)).